A 179-amino-acid chain; its full sequence is Natural killer cells antigen CD94 (179 aa).

The Cytoplasmic portion of the chain corresponds to 1–10; it reads MAVSRITRWR. A helical; Signal-anchor for type II membrane protein transmembrane segment spans residues 11–31; sequence LMSMFFGIKCLFLIVALGVLV. Residues 32–179 are Extracellular-facing; that stretch reads KNSFTIQNIQ…NRFICKQLPT (148 aa). 4 disulfide bridges follow: cysteine 58/cysteine 70, cysteine 61/cysteine 72, cysteine 89/cysteine 174, and cysteine 152/cysteine 166. Positions 68 to 175 constitute a C-type lectin domain; the sequence is HQCSCYFISK…CENKNRFICK (108 aa). Asparagine 93 carries an N-linked (GlcNAc...) asparagine glycan.

Can form disulfide-bonded heterodimer with NKG2 family members KLRC1 and KLRC2. KLRD1-KLRC1 heterodimer interacts with peptide-bound MHC-E-B2M heterotrimeric complex. KLRD1 plays a prominent role in directly interacting with MHC-E. KLRD1-KLRC1 interacts with much higher affinity with peptide-bound MHC-E-B2M than KLRD1-KLRC2. Interacts with the adapter protein TYROBP/DAP12; this interaction is required for cell surface expression and cell activation.

The protein resides in the cell membrane. In terms of biological role, immune receptor involved in self-nonself discrimination. In complex with KLRC1 or KLRC2 on cytotoxic and regulatory lymphocyte subsets, recognizes non-classical major histocompatibility (MHC) class Ib molecule MHC-E loaded with self-peptides derived from the signal sequence of classical MHC class Ia and non-classical MHC class Ib molecules. Enables cytotoxic cells to monitor the expression of MHC class I molecules in healthy cells and to tolerate self. Primarily functions as a ligand binding subunit as it lacks the capacity to signal. Its function is as follows. KLRD1-KLRC1 acts as an immune inhibitory receptor. Key inhibitory receptor on natural killer (NK) cells that regulates their activation and effector functions. Dominantly counteracts T cell receptor signaling on a subset of memory/effector CD8-positive T cells as part of an antigen-driven response to avoid autoimmunity. On intraepithelial CD8-positive gamma-delta regulatory T cells triggers TGFB1 secretion, which in turn limits the cytotoxic programming of intraepithelial CD8-positive alpha-beta T cells, distinguishing harmless from pathogenic antigens. In MHC-E-rich tumor microenvironment, acts as an immune inhibitory checkpoint and may contribute to progressive loss of effector functions of NK cells and tumor-specific T cells, a state known as cell exhaustion. Upon MHC-E-peptide binding, transmits intracellular signals through KLRC1 immunoreceptor tyrosine-based inhibition motifs (ITIMs) by recruiting INPP5D/SHIP-1 and INPPL1/SHIP-2 tyrosine phosphatases to ITIMs, and ultimately opposing signals transmitted by activating receptors through dephosphorylation of proximal signaling molecules. KLRD1-KLRC2 acts as an immune activating receptor. On cytotoxic lymphocyte subsets recognizes MHC-E loaded with signal sequence-derived peptides from non-classical MHC class Ib MHC-G molecules, likely playing a role in the generation and effector functions of adaptive NK cells and in maternal-fetal tolerance during pregnancy. Regulates the effector functions of terminally differentiated cytotoxic lymphocyte subsets, and in particular may play a role in adaptive NK cell response to viral infection. Upon MHC-E-peptide binding, transmits intracellular signals via the adapter protein TYROBP/DAP12, triggering the phosphorylation of proximal signaling molecules and cell activation. This is Natural killer cells antigen CD94 (Klrd1) from Rattus norvegicus (Rat).